Here is a 141-residue protein sequence, read N- to C-terminus: 3-hydroxyacyl-[acyl-carrier-protein] dehydratase FabZ (141 aa).

The active site involves H49.

The protein belongs to the thioester dehydratase family. FabZ subfamily.

The protein localises to the cytoplasm. It carries out the reaction a (3R)-hydroxyacyl-[ACP] = a (2E)-enoyl-[ACP] + H2O. Functionally, involved in unsaturated fatty acids biosynthesis. Catalyzes the dehydration of short chain beta-hydroxyacyl-ACPs and long chain saturated and unsaturated beta-hydroxyacyl-ACPs. This chain is 3-hydroxyacyl-[acyl-carrier-protein] dehydratase FabZ (fabZ2), found in Enterococcus faecalis (strain ATCC 700802 / V583).